A 243-amino-acid polypeptide reads, in one-letter code: DNA repair protein RecO (243 aa).

This sequence belongs to the RecO family.

In terms of biological role, involved in DNA repair and RecF pathway recombination. The chain is DNA repair protein RecO from Caulobacter vibrioides (strain NA1000 / CB15N) (Caulobacter crescentus).